The chain runs to 96 residues: Probable quinol oxidase subunit 4 (96 aa).

3 helical membrane-spanning segments follow: residues 8–28 (TVGF…TLYT), 36–56 (VTII…MFMH), and 68–88 (FKVI…YWVM).

It belongs to the cytochrome c oxidase bacterial subunit 4 family.

It is found in the cell membrane. It catalyses the reaction 2 a quinol + O2 = 2 a quinone + 2 H2O. In terms of biological role, catalyzes quinol oxidation with the concomitant reduction of oxygen to water. The protein is Probable quinol oxidase subunit 4 (qoxD) of Staphylococcus epidermidis (strain ATCC 35984 / DSM 28319 / BCRC 17069 / CCUG 31568 / BM 3577 / RP62A).